The chain runs to 294 residues: N-acetylmuramic acid 6-phosphate etherase (294 aa).

The SIS domain occupies 56 to 219 (TSYSLRNGGR…STLSMVSVGK (164 aa)). Glu84 serves as the catalytic Proton donor. Glu115 is a catalytic residue.

It belongs to the GCKR-like family. MurNAc-6-P etherase subfamily. As to quaternary structure, homodimer.

The catalysed reaction is N-acetyl-D-muramate 6-phosphate + H2O = N-acetyl-D-glucosamine 6-phosphate + (R)-lactate. The protein operates within amino-sugar metabolism; 1,6-anhydro-N-acetylmuramate degradation. It participates in amino-sugar metabolism; N-acetylmuramate degradation. Its pathway is cell wall biogenesis; peptidoglycan recycling. Its function is as follows. Specifically catalyzes the cleavage of the D-lactyl ether substituent of MurNAc 6-phosphate, producing GlcNAc 6-phosphate and D-lactate. Together with AnmK, is also required for the utilization of anhydro-N-acetylmuramic acid (anhMurNAc) either imported from the medium or derived from its own cell wall murein, and thus plays a role in cell wall recycling. This Francisella tularensis subsp. holarctica (strain LVS) protein is N-acetylmuramic acid 6-phosphate etherase.